The following is a 515-amino-acid chain: Rop guanine nucleotide exchange factor 12 (515 aa).

The PRONE domain maps to 83-446 (QARERQLLAD…RAGNKRNTPL (364 aa)). Ser-510 bears the Phosphoserine mark.

In terms of assembly, interacts (via C-terminus) with PRK2. Interacts with PRK6. As to expression, expressed in pollen grains.

It localises to the cytoplasm. The protein localises to the cell membrane. Phosphorylation at Ser-510 by PRK2 may release ROPGEF12 auto-inhibition, thereby activating ROPGEF12 and downstream Rop signaling. Guanine-nucleotide exchange factor (GEF) that acts as an activator of Rop (Rho of plants) GTPases by promoting the exchange of GDP for GTP. May be recruited by PRK2 at the plasma membrane to maintain polar Rop activity in the pollen tube and control polarized pollen tube growth. The chain is Rop guanine nucleotide exchange factor 12 from Arabidopsis thaliana (Mouse-ear cress).